Reading from the N-terminus, the 287-residue chain is MAEITAALVKELRERTGEGMMDCKKALTKAGGDIEKAIDDMRASGAIKAAKKAGNVAAEGAIAIKDDGKAAVIIEVNSQTDFLALQDDFKAFVAASVEKAFADKLTDVAPLIEAQEAARLVLVGKVGENVNIRRLKRIEGDVVGTYLHGNKIGVVVTLKGGDVELAKDIAMHVAASNPEFLFPSEVSAEAIEREKNVFLQLNEDKIKGKPAEIVEKMVGGRITKFLAEASLVEQAFVKNPEVKVGDLAKKAGAEIVSFTYFKVGDGIEKPVDNFADEVAAQLAAAKQ.

The involved in Mg(2+) ion dislocation from EF-Tu stretch occupies residues 80–83 (TDFL).

Belongs to the EF-Ts family.

The protein resides in the cytoplasm. In terms of biological role, associates with the EF-Tu.GDP complex and induces the exchange of GDP to GTP. It remains bound to the aminoacyl-tRNA.EF-Tu.GTP complex up to the GTP hydrolysis stage on the ribosome. The protein is Elongation factor Ts of Pseudomonas syringae pv. syringae (strain B728a).